We begin with the raw amino-acid sequence, 1825 residues long: Serine protease/ABC transporter B family protein tagD (1825 aa).

The first 26 residues, 1 to 26, serve as a signal peptide directing secretion; it reads MKSNTNIRVLLVSGLILIFIFLGIKF. Residues 307–727 form the Peptidase S8 domain; it reads PKAIFGTKDT…NAVFDTFAGA (421 aa). Catalysis depends on charge relay system residues D338 and H384. A glycan (N-linked (GlcNAc...) asparagine) is linked at N629. Residue S652 is the Charge relay system of the active site. N-linked (GlcNAc...) asparagine glycosylation is found at N704, N781, N849, and N896. Residues 971-991 form a helical membrane-spanning segment; sequence YIVIIVAGGTMSLIITVLILI. N1018 carries N-linked (GlcNAc...) asparagine glycosylation. Transmembrane regions (helical) follow at residues 1071-1091, 1116-1136, 1189-1209, and 1210-1230; these read FIIE…ASIL, FIII…SSWI, GILL…VFIF, and TISW…AIVT. Residues 1075–1358 enclose the ABC transmembrane type-1 domain; it reads ITISTACSLV…LFGVYSSYVQ (284 aa). N1295 carries an N-linked (GlcNAc...) asparagine glycan. The next 2 helical transmembrane spans lie at 1304 to 1324 and 1327 to 1347; these read WLMV…LAIQ and FTVG…DSST. A disordered region spans residues 1386 to 1529; that stretch reads DNIIDTNQDN…NDDPNDNNGI (144 aa). Residues 1388-1402 show a composition bias toward low complexity; the sequence is IIDTNQDNNNNNNND. Acidic residues predominate over residues 1403-1415; the sequence is DISDSSSDDDDDN. N1424 is a glycosylation site (N-linked (GlcNAc...) asparagine). A compositionally biased stretch (low complexity) spans 1465-1494; that stretch reads GEGIDNNNNNNNDNNINDDNNQQDPNNNNN. Residues 1495-1514 are compositionally biased toward acidic residues; that stretch reads EIDDDGDDDGDDDDEGEDEN. Positions 1515 to 1529 are enriched in low complexity; it reads NNNNNNDDPNDNNGI. The ABC transporter domain maps to 1576–1813; the sequence is IEFKNVSFCY…KGKYYRMFAF (238 aa). An N-linked (GlcNAc...) asparagine glycan is attached at N1580. Position 1611-1618 (1611-1618) interacts with ATP; the sequence is GPSGSGKS. N-linked (GlcNAc...) asparagine glycosylation is found at N1715 and N1755.

It in the C-terminal section; belongs to the ABC transporter superfamily. ABCB family. Multidrug resistance exporter (TC 3.A.1.201) subfamily. In the N-terminal section; belongs to the peptidase S8 family.

It localises to the membrane. The chain is Serine protease/ABC transporter B family protein tagD (tagD) from Dictyostelium discoideum (Social amoeba).